The primary structure comprises 283 residues: Bifunctional protein FolD (283 aa).

NADP(+) is bound by residues 164 to 166, S189, and T230; that span reads GRS.

Belongs to the tetrahydrofolate dehydrogenase/cyclohydrolase family. As to quaternary structure, homodimer.

The catalysed reaction is (6R)-5,10-methylene-5,6,7,8-tetrahydrofolate + NADP(+) = (6R)-5,10-methenyltetrahydrofolate + NADPH. It carries out the reaction (6R)-5,10-methenyltetrahydrofolate + H2O = (6R)-10-formyltetrahydrofolate + H(+). It participates in one-carbon metabolism; tetrahydrofolate interconversion. In terms of biological role, catalyzes the oxidation of 5,10-methylenetetrahydrofolate to 5,10-methenyltetrahydrofolate and then the hydrolysis of 5,10-methenyltetrahydrofolate to 10-formyltetrahydrofolate. In Dictyoglomus thermophilum (strain ATCC 35947 / DSM 3960 / H-6-12), this protein is Bifunctional protein FolD.